The following is a 76-amino-acid chain: MNIGIGVLIFVIGALLGAVAGFFGARAYMKKYFEENPPVNEDMLKAMMMQMGQKPSEKKLNQMMSSMKAQQKRSKK.

A helical membrane pass occupies residues 3–23; sequence IGIGVLIFVIGALLGAVAGFF. Positions 55–76 are disordered; it reads PSEKKLNQMMSSMKAQQKRSKK.

Belongs to the UPF0154 family.

Its subcellular location is the cell membrane. This chain is UPF0154 protein LCA_1273, found in Latilactobacillus sakei subsp. sakei (strain 23K) (Lactobacillus sakei subsp. sakei).